The chain runs to 204 residues: Probable GTP-binding protein EngB (204 aa).

The EngB-type G domain occupies 22-197 (GFPEIAFVGR…LAEFDNVLSI (176 aa)). Residues 30–37 (GRSNVGKS), 57–61 (GKTRQ), 75–78 (DLPG), 144–147 (NKVD), and 176–178 (FSA) each bind GTP. Ser-37 and Thr-59 together coordinate Mg(2+).

It belongs to the TRAFAC class TrmE-Era-EngA-EngB-Septin-like GTPase superfamily. EngB GTPase family. Mg(2+) is required as a cofactor.

In terms of biological role, necessary for normal cell division and for the maintenance of normal septation. This chain is Probable GTP-binding protein EngB, found in Ruminiclostridium cellulolyticum (strain ATCC 35319 / DSM 5812 / JCM 6584 / H10) (Clostridium cellulolyticum).